Here is a 336-residue protein sequence, read N- to C-terminus: Dihydroorotate dehydrogenase (quinone) (336 aa).

Residues 62–66 (AGLDK) and Thr86 contribute to the FMN site. Lys66 is a binding site for substrate. 111–115 (NRMGF) is a binding site for substrate. 2 residues coordinate FMN: Asn139 and Asn172. Asn172 is a binding site for substrate. Ser175 serves as the catalytic Nucleophile. Substrate is bound at residue Asn177. Residues Lys217 and Thr245 each contribute to the FMN site. Residue 246–247 (NT) coordinates substrate. Residues Gly268, Gly297, and 318 to 319 (FS) each bind FMN.

This sequence belongs to the dihydroorotate dehydrogenase family. Type 2 subfamily. Monomer. FMN is required as a cofactor.

Its subcellular location is the cell membrane. It carries out the reaction (S)-dihydroorotate + a quinone = orotate + a quinol. Its pathway is pyrimidine metabolism; UMP biosynthesis via de novo pathway; orotate from (S)-dihydroorotate (quinone route): step 1/1. Functionally, catalyzes the conversion of dihydroorotate to orotate with quinone as electron acceptor. The polypeptide is Dihydroorotate dehydrogenase (quinone) (Photorhabdus laumondii subsp. laumondii (strain DSM 15139 / CIP 105565 / TT01) (Photorhabdus luminescens subsp. laumondii)).